A 359-amino-acid polypeptide reads, in one-letter code: Transcription elongation factor A N-terminal and central domain-containing protein (359 aa).

The TFIIS N-terminal domain maps to 1 to 82 (MSDKNQIIAR…AKWRGFYKST (82 aa)). Residues 84 to 118 (CKPRQSPKVLHTNANKEESAAVSQDVSQDETSGSS) are disordered. Residues 104-118 (AVSQDVSQDETSGSS) are compositionally biased toward polar residues. Residues 182–298 (VRSKCVELLY…EHCLPQSVDG (117 aa)) form the TFIIS central domain.

The protein is Transcription elongation factor A N-terminal and central domain-containing protein (Tceanc) of Mus musculus (Mouse).